We begin with the raw amino-acid sequence, 831 residues long: Translation initiation factor IF-2 (831 aa).

The tract at residues 116 to 157 is disordered; that stretch reads IEPLETDKEVEQKQQNTEENKVEVSAKIVQDDEDIPSQIPKK. Residues 117-139 show a composition bias toward basic and acidic residues; the sequence is EPLETDKEVEQKQQNTEENKVEV. One can recognise a tr-type G domain in the interval 329–499; that stretch reads TRAPVVTVMG…LLIAEMQDLK (171 aa). The interval 338–345 is G1; that stretch reads GHVDHGKT. 338–345 provides a ligand contact to GTP; that stretch reads GHVDHGKT. Residues 363-367 form a G2 region; it reads GITQH. Residues 385–388 form a G3 region; that stretch reads DTPG. GTP-binding positions include 385-389 and 439-442; these read DTPGH and NKID. The segment at 439–442 is G4; the sequence is NKID. Residues 475–477 are G5; it reads SAL.

This sequence belongs to the TRAFAC class translation factor GTPase superfamily. Classic translation factor GTPase family. IF-2 subfamily.

Its subcellular location is the cytoplasm. In terms of biological role, one of the essential components for the initiation of protein synthesis. Protects formylmethionyl-tRNA from spontaneous hydrolysis and promotes its binding to the 30S ribosomal subunits. Also involved in the hydrolysis of GTP during the formation of the 70S ribosomal complex. The chain is Translation initiation factor IF-2 from Rickettsia conorii (strain ATCC VR-613 / Malish 7).